The primary structure comprises 199 residues: Recombination protein RecR (199 aa).

The C4-type zinc-finger motif lies at 58-73 (CRTCFSLSDQPECRIC). Residues 81 to 176 (SIICVVEKPT…NVTRIASGVP (96 aa)) form the Toprim domain.

This sequence belongs to the RecR family.

In terms of biological role, may play a role in DNA repair. It seems to be involved in an RecBC-independent recombinational process of DNA repair. It may act with RecF and RecO. In Desulforapulum autotrophicum (strain ATCC 43914 / DSM 3382 / VKM B-1955 / HRM2) (Desulfobacterium autotrophicum), this protein is Recombination protein RecR.